A 522-amino-acid polypeptide reads, in one-letter code: Cytochrome P450 1A3 (522 aa).

F229 is a substrate binding site. Residue C463 participates in heme binding.

This sequence belongs to the cytochrome P450 family. It depends on heme as a cofactor. As to expression, liver.

The protein resides in the endoplasmic reticulum membrane. It localises to the microsome membrane. It catalyses the reaction an organic molecule + reduced [NADPH--hemoprotein reductase] + O2 = an alcohol + oxidized [NADPH--hemoprotein reductase] + H2O + H(+). Functionally, cytochromes P450 are a group of heme-thiolate monooxygenases. They oxidize a variety of structurally unrelated compounds, including steroids, fatty acids, and xenobiotics. In Oncorhynchus mykiss (Rainbow trout), this protein is Cytochrome P450 1A3 (cyp1a3).